We begin with the raw amino-acid sequence, 665 residues long: FAD-dependent oxidoreductase domain-containing protein 2 (665 aa).

The N-terminal stretch at 1–17 (MGPSGLLVALALHLAVC) is a signal peptide. N-linked (GlcNAc...) asparagine glycosylation occurs at Asn136. A disordered region spans residues 642–665 (RWLGDHSTAPEPLTQSLDSNKEEL). The short motif at 662–665 (KEEL) is the Prevents secretion from ER element.

It belongs to the FOXRED2 family. In terms of assembly, interacts with SEL1L. May interact with OS9 and DNAJC10. Interacts with TXNDC16. It depends on FAD as a cofactor. N-glycosylated.

Its subcellular location is the endoplasmic reticulum lumen. Probable flavoprotein which may function in endoplasmic reticulum associated degradation (ERAD). May bind non-native proteins in the endoplasmic reticulum and target them to the ubiquitination machinery for subsequent degradation. The sequence is that of FAD-dependent oxidoreductase domain-containing protein 2 from Mus musculus (Mouse).